The primary structure comprises 504 residues: Maturase K (504 aa).

This sequence belongs to the intron maturase 2 family. MatK subfamily.

Its subcellular location is the plastid. The protein localises to the chloroplast. Functionally, usually encoded in the trnK tRNA gene intron. Probably assists in splicing its own and other chloroplast group II introns. This chain is Maturase K, found in Aucuba japonica (Japanese laurel).